An 863-amino-acid polypeptide reads, in one-letter code: Receptor-like protein 9DC1 (863 aa).

An N-terminal signal peptide occupies residues 1–21 (MGCVKLVFFMLYVFLFQLVSS). The Extracellular portion of the chain corresponds to 22–812 (SSLPHLCPED…EEDSPMISWQ (791 aa)). The interval 24 to 90 (LPHLCPEDQA…GVHCDETTGQ (67 aa)) is N-cap. Residues Asn-71 and Asn-108 are each glycosylated (N-linked (GlcNAc...) asparagine). One copy of the LRR 1; degenerate repeat lies at 91–114 (VIALDLRCSQLQGKFHSNSSLFQL). LRR repeat units follow at residues 115–138 (SNLKRLDLSNNNFIGSLISPKFGE) and 140–163 (SDLTHLDLSDSSFTGVIPSEISHL). One copy of the LRR 4; degenerate repeat lies at 164–190 (SKLHVLLIGDQYGLSIVPHNFEPLLKN). N-linked (GlcNAc...) asparagine glycans are attached at residues Asn-190, Asn-203, and Asn-211. 6 LRR repeats span residues 191 to 213 (LTQLRELNLYEVNLSSTVPSNFS), 214 to 237 (SHLTTLQLSGTGLRGLLPERVFHL), 240 to 262 (LEFLDLSYNSQLMVRFPTTKWNS), 264 to 286 (ASLMKLYVHSVNIADRIPESFSH), 287 to 311 (LTSLHELDMGYTNLSGPIPKPLWNL), and 312 to 336 (TNIESLDLRYNHLEGPIPQLPIFEK). A glycan (N-linked (GlcNAc...) asparagine) is linked at Asn-261. 2 N-linked (GlcNAc...) asparagine glycosylation sites follow: Asn-299 and Asn-310. Residues 337–357 (LKKLSLFRNDNLDGGLEFLSF) form an LRR 11; degenerate repeat. LRR repeat units lie at residues 358-382 (NTQLERLDLSSNSLTGPIPSNISGL), 383-406 (QNLECLYLSSNHLNGSIPSWIFSL), 408-428 (SLVELDLSNNTFSGKIQEFKS), 429-452 (KTLSAVTLKQNKLKGRIPNSLLNQ), 454-476 (NLQLLLLSHNNISGHISSAICNL), 477-500 (KTLILLDLGSNNLEGTIPQCVVER), 502-524 (EYLSHLDLSKNRLSGTINTTFSV), 525-549 (GNILRVISLHGNKLTGKVPRSMINC), 551-572 (YLTLLDLGNNMLNDTFPNWLGY), 573-597 (LFQLKILSLRSNKLHGPIKSSGNTN), 599-623 (FMGLQILDLSSNGFSGNLPERILGN), 667-690 (LDSNMIINLSKNRFEGHIPSIIGD), 691-714 (LVGLRTLNLSHNVLEGHIPASFQN), 715-739 (LSVLESLDLSSNKISGEIPQQLASL), and 741-759 (FLEVLNLSHNHLVGCIPKG). N-linked (GlcNAc...) asparagine glycans are attached at residues Asn-378, Asn-396, and Asn-416. An N-linked (GlcNAc...) asparagine glycan is attached at Asn-464. A glycan (N-linked (GlcNAc...) asparagine) is linked at Asn-519. A glycan (N-linked (GlcNAc...) asparagine) is linked at Asn-563. N-linked (GlcNAc...) asparagine glycans are attached at residues Asn-674, Asn-698, and Asn-714. N-linked (GlcNAc...) asparagine glycosylation is found at Asn-746 and Asn-767. The tract at residues 760–812 (KQFDSFGNTSYQGNDGLRGFPLSKLCGGEDQVTTPAELDQEEEEEDSPMISWQ) is C-cap/acidic domain. The helical transmembrane segment at 813–833 (GVLVGYGCGLVIGLSVIYIMW) threads the bilayer. The Cytoplasmic segment spans residues 834 to 863 (STQYPAWFSRMDLKLEHIITTKMKKHKKRY).

Belongs to the RLP family.

The protein localises to the cell membrane. Its function is as follows. Involved in plant defense. Confers resistance to the fungal pathogen C.fulvum through recognition of the AVR9 elicitor protein. This chain is Receptor-like protein 9DC1, found in Solanum pimpinellifolium (Currant tomato).